We begin with the raw amino-acid sequence, 196 residues long: UMP-CMP kinase (196 aa).

13-18 (GAGKGT) lines the ATP pocket. Residue S33 is modified to Phosphoserine. The interval 33-63 (SAGELLRDERKNPDSQYGELIEKYIKDGKIV) is NMP. R39 provides a ligand contact to a ribonucleoside 5'-phosphate. N6-acetyllysine occurs at positions 43 and 55. Residues 61–63 (KIV) and 93–96 (GFPR) contribute to the a ribonucleoside 5'-phosphate site. N100 contributes to the CMP binding site. K106 carries the post-translational modification N6-succinyllysine. The segment at 133-143 (ERGKSSGRSDD) is LID. R134 lines the ATP pocket. 2 residues coordinate a ribonucleoside 5'-phosphate: R140 and R151. Residue K179 coordinates ATP. S180 is modified (phosphoserine).

It belongs to the adenylate kinase family. UMP-CMP kinase subfamily. In terms of assembly, monomer. Requires Mg(2+) as cofactor.

The protein localises to the nucleus. Its subcellular location is the cytoplasm. It carries out the reaction CMP + ATP = CDP + ADP. It catalyses the reaction dCMP + ATP = dCDP + ADP. The catalysed reaction is UMP + ATP = UDP + ADP. The enzyme catalyses a 2'-deoxyribonucleoside 5'-diphosphate + ATP = a 2'-deoxyribonucleoside 5'-triphosphate + ADP. It carries out the reaction a ribonucleoside 5'-diphosphate + ATP = a ribonucleoside 5'-triphosphate + ADP. Functionally, catalyzes the phosphorylation of pyrimidine nucleoside monophosphates at the expense of ATP. Plays an important role in de novo pyrimidine nucleotide biosynthesis. Has preference for UMP and CMP as phosphate acceptors. Also displays broad nucleoside diphosphate kinase activity. In Bos taurus (Bovine), this protein is UMP-CMP kinase.